Consider the following 318-residue polypeptide: MFLVNLLLMIIPILLAVAFLTLLERKTLGYMQLRKGPNIVGPHGLLQPIADAIKLFTKEPLRPLTSSTSMFIMAPILALSLALTMWTPLPMPYPLINMNLGVLFILAMSSLAVYSILWSGWASNSKYALIGALRAVAQTISYEVTLAIILLSVLLMSGSFSLPNLSTTQENLWLIIPAWPLAMMWFISTLAETNRAPFDLTEGESELVSGFNVEYAGGSFALFFLAEYANIIMMNAITTTLFLGLYQNPSLPEFYTTSFMIKTLLMTITFLWIRASYPRFRYDQLMHLLWKNFLPLTLALCMWHVSIPILTASIPPQT.

The next 8 helical transmembrane spans lie at 2–22, 70–90, 100–120, 140–160, 172–192, 217–237, 253–273, and 294–314; these read FLVNLLLMIIPILLAVAFLTL, MFIMAPILALSLALTMWTPLP, LGVLFILAMSSLAVYSILWSG, ISYEVTLAIILLSVLLMSGSF, LWLIIPAWPLAMMWFISTLAE, GGSFALFFLAEYANIIMMNAI, EFYTTSFMIKTLLMTITFLWI, and LPLTLALCMWHVSIPILTASI.

Belongs to the complex I subunit 1 family. In terms of assembly, core subunit of respiratory chain NADH dehydrogenase (Complex I) which is composed of 45 different subunits.

It is found in the mitochondrion inner membrane. It catalyses the reaction a ubiquinone + NADH + 5 H(+)(in) = a ubiquinol + NAD(+) + 4 H(+)(out). Its function is as follows. Core subunit of the mitochondrial membrane respiratory chain NADH dehydrogenase (Complex I) which catalyzes electron transfer from NADH through the respiratory chain, using ubiquinone as an electron acceptor. Essential for the catalytic activity and assembly of complex I. This is NADH-ubiquinone oxidoreductase chain 1 (MT-ND1) from Emballonura alecto (Philippine sheath-tailed bat).